A 525-amino-acid chain; its full sequence is Cobyric acid synthase (525 aa).

One can recognise a GATase cobBQ-type domain in the interval 251–452 (ELEIAVLYLP…FHGIFDNDLL (202 aa)). Catalysis depends on Cys-332, which acts as the Nucleophile. His-444 is a catalytic residue.

The protein belongs to the CobB/CobQ family. CobQ subfamily.

Its pathway is cofactor biosynthesis; adenosylcobalamin biosynthesis. Functionally, catalyzes amidations at positions B, D, E, and G on adenosylcobyrinic A,C-diamide. NH(2) groups are provided by glutamine, and one molecule of ATP is hydrogenolyzed for each amidation. In Pelotomaculum thermopropionicum (strain DSM 13744 / JCM 10971 / SI), this protein is Cobyric acid synthase.